A 235-amino-acid chain; its full sequence is dITP/XTP pyrophosphatase (235 aa).

7–12 (STNPGK) lines the substrate pocket. Aspartate 70 serves as the catalytic Proton acceptor. Position 70 (aspartate 70) interacts with Mg(2+). Substrate contacts are provided by residues serine 71, 180–183 (FGYD), lysine 211, and 216–217 (HR).

The protein belongs to the HAM1 NTPase family. As to quaternary structure, homodimer. The cofactor is Mg(2+).

The catalysed reaction is XTP + H2O = XMP + diphosphate + H(+). It carries out the reaction dITP + H2O = dIMP + diphosphate + H(+). It catalyses the reaction ITP + H2O = IMP + diphosphate + H(+). Pyrophosphatase that catalyzes the hydrolysis of nucleoside triphosphates to their monophosphate derivatives, with a high preference for the non-canonical purine nucleotides XTP (xanthosine triphosphate), dITP (deoxyinosine triphosphate) and ITP. Seems to function as a house-cleaning enzyme that removes non-canonical purine nucleotides from the nucleotide pool, thus preventing their incorporation into DNA/RNA and avoiding chromosomal lesions. The polypeptide is dITP/XTP pyrophosphatase (Anaeromyxobacter dehalogenans (strain 2CP-C)).